The primary structure comprises 288 residues: Mycothiol S-conjugate amidase (288 aa).

3 residues coordinate Zn(2+): His-12, Asp-15, and His-142.

This sequence belongs to the MshB deacetylase family. Mca subfamily. In terms of assembly, monomer. The cofactor is Zn(2+).

The catalysed reaction is mycothiol S-conjugate + H2O = an N-acetyl-L-cysteine-S-conjugate + 1D-myo-inositol 2-amino-2-deoxy-alpha-D-glucopyranoside. With respect to regulation, partially inhibited by MSH when MSmB (a bimane derivative of MSH) is used as substrate. Functionally, a mycothiol (MSH, N-acetyl-cysteinyl-glucosaminyl-inositol) S-conjugate amidase, it recycles conjugated MSH to the N-acetyl cysteine conjugate and the MSH precursor. Involved in MSH-dependent detoxification of a number of alkylating agents and antibiotics. Activity is specific for the mycothiol moiety. The sequence is that of Mycothiol S-conjugate amidase from Mycolicibacterium smegmatis (strain ATCC 700084 / mc(2)155) (Mycobacterium smegmatis).